A 423-amino-acid chain; its full sequence is Histidine--tRNA ligase (423 aa).

This sequence belongs to the class-II aminoacyl-tRNA synthetase family. Homodimer.

Its subcellular location is the cytoplasm. It carries out the reaction tRNA(His) + L-histidine + ATP = L-histidyl-tRNA(His) + AMP + diphosphate + H(+). This Haemophilus influenzae (strain PittEE) protein is Histidine--tRNA ligase.